Here is a 44-residue protein sequence, read N- to C-terminus: Photosystem II reaction center protein K (44 aa).

Residues 1 to 7 (METLLLS) constitute a propeptide that is removed on maturation. The helical transmembrane segment at 23–43 (LPIIPVFFLLLAFVWQAAIGF) threads the bilayer.

The protein belongs to the PsbK family. In terms of assembly, PSII is composed of 1 copy each of membrane proteins PsbA, PsbB, PsbC, PsbD, PsbE, PsbF, PsbH, PsbI, PsbJ, PsbK, PsbL, PsbM, PsbT, PsbX, PsbY, PsbZ, Psb30/Ycf12, at least 3 peripheral proteins of the oxygen-evolving complex and a large number of cofactors. It forms dimeric complexes.

The protein localises to the plastid. Its subcellular location is the chloroplast thylakoid membrane. In terms of biological role, one of the components of the core complex of photosystem II (PSII). PSII is a light-driven water:plastoquinone oxidoreductase that uses light energy to abstract electrons from H(2)O, generating O(2) and a proton gradient subsequently used for ATP formation. It consists of a core antenna complex that captures photons, and an electron transfer chain that converts photonic excitation into a charge separation. The sequence is that of Photosystem II reaction center protein K from Phaeodactylum tricornutum (strain CCAP 1055/1).